The primary structure comprises 566 residues: Amino acid transporter 6-1 (566 aa).

11 consecutive transmembrane segments (helical) span residues 65–85 (YVLLLLYSIVVFTTGAVFYGW), 137–157 (MTFAVACLMSAGAGTLLDWLG), 158–178 (PLWTELLGQLLNLVGWLFLAF), 187–207 (YPALVFIGLGADASMLPTLCI), 216–236 (GLIITILGSAASASFGIPLVL), 250–270 (VSIGYCFFGPVLGVLVALLFM), 334–354 (FFSIRYFLIVLYFVVVSWATS), 367–387 (DVVSVIEVLLPLSFIPCILLG), 392–412 (VVGIIRVLFVMNTSGLLTYVF), 423–443 (LSACCFMVYMSLLTSQVYVYV), and 455–475 (LIGISNLTGGLLSLVSNPLYE). N-linked (GlcNAc...) asparagine glycosylation occurs at Asn476. A helical membrane pass occupies residues 489–509 (IQIAMTALLCVQYVWIFILGF).

It belongs to the SLC43A transporter (TC 2.A.1.44) family.

The protein resides in the cell membrane. The enzyme catalyses L-lysine(in) = L-lysine(out). It catalyses the reaction L-arginine(in) = L-arginine(out). The catalysed reaction is L-methionine(in) = L-methionine(out). It carries out the reaction L-leucine(in) = L-leucine(out). Functionally, cationic and neutral amino acid transporter. Transports lysine with high affinity. Can transport arginine, methionine and leucine. Does not require inorganic ions, such as sodium, chloride, potassium, calcium or magnesium, for transport activity. In Toxoplasma gondii (strain ATCC 50611 / Me49), this protein is Amino acid transporter 6-1.